The chain runs to 497 residues: Cytochrome P450 98A8 (497 aa).

Residues 2-19 form a helical membrane-spanning segment; it reads IIYLISLLPIIVATLMLY. Cys431 is a binding site for heme.

Belongs to the cytochrome P450 family. Requires heme as cofactor. In terms of tissue distribution, strongly expressed in inflorescence tips, young flower buds, seeds, stamen, tapetum and pollen.

Its subcellular location is the membrane. Acts redundantly with CYP98A9 as tricoumaroylspermidine meta-hydroxylase. Also catalyzes the meta-hydroxylation of the three triferuloylspermidine phenolic rings. Unable to use 5-O-(4-coumaroyl) D-quinate or 5-O-(4-coumaroyl) shikimate as substrates. This chain is Cytochrome P450 98A8 (CYP98A8), found in Arabidopsis thaliana (Mouse-ear cress).